Reading from the N-terminus, the 695-residue chain is Elongation factor G (695 aa).

A tr-type G domain is found at 4–279 (EKVRNIGISA…AVTQYLPSPL (276 aa)). GTP-binding positions include 13–20 (AHIDSGKT), 79–83 (DTPGH), and 133–136 (NKMD).

Belongs to the TRAFAC class translation factor GTPase superfamily. Classic translation factor GTPase family. EF-G/EF-2 subfamily.

The protein resides in the cytoplasm. Catalyzes the GTP-dependent ribosomal translocation step during translation elongation. During this step, the ribosome changes from the pre-translocational (PRE) to the post-translocational (POST) state as the newly formed A-site-bound peptidyl-tRNA and P-site-bound deacylated tRNA move to the P and E sites, respectively. Catalyzes the coordinated movement of the two tRNA molecules, the mRNA and conformational changes in the ribosome. In Rhodopirellula baltica (strain DSM 10527 / NCIMB 13988 / SH1), this protein is Elongation factor G.